The sequence spans 127 residues: MALKIRLSRGGSKKRPYYHIIVADARSPRDGRFLERVGAWDPMLPKDGPRVKLNEERIQYWLGQGAQPTDRVLRFLDAAGLKKRPTRNNPHKGEPGKKAQERIAAAKQAAEEAAAAKTESAPISEEV.

Residues 80–127 (GLKKRPTRNNPHKGEPGKKAQERIAAAKQAAEEAAAAKTESAPISEEV) are disordered. Residues 81–90 (LKKRPTRNNP) are compositionally biased toward basic residues. Residues 91–101 (HKGEPGKKAQE) are compositionally biased toward basic and acidic residues. The segment covering 102–121 (RIAAAKQAAEEAAAAKTESA) has biased composition (low complexity).

Belongs to the bacterial ribosomal protein bS16 family.

This is Small ribosomal subunit protein bS16 from Bartonella henselae (strain ATCC 49882 / DSM 28221 / CCUG 30454 / Houston 1) (Rochalimaea henselae).